A 456-amino-acid polypeptide reads, in one-letter code: uncharacterized protein (456 aa).

The protein belongs to the herpesviridae UL49 family.

This is an uncharacterized protein from Equus caballus (Horse).